Consider the following 403-residue polypeptide: MELRVGNRYRLGRKIGSGSFGDIYLGTDITTGEEVAIKLECVKTKHPQLHIESKIYKMMQGGVGIPTIKWCGAEGDYNVMVMELLGPSLEDLFNFCSRKFSLKTVLLLADQMISRIEYIHSKNFIHRDVKPDNFLMGLGKKGNLVYIIDFGLAKKYRDARTHQHIPYRENKNLTGTARYASINTHLGIEQSRRDDLESLGYVLMYFNLGSLPWQGLKAATKRQKYERISEKKMSTPIEVLCKGYPSEFATYLNFCRSLRFDDKPDYSYLRQLFRNLFHRQGFSYDYVFDWNMLKFGGAREDPERDRRDREERIRQGRIPLPRVMLPTSSGRPRGTQEVAPAPPLTPDSHTGMERERKVSMRLHRGAPVNVSSSDLTGRQDCSRISTSQAHSRVPSGLQSAVPR.

Residues 9–277 (YRLGRKIGSG…YLRQLFRNLF (269 aa)) enclose the Protein kinase domain. ATP is bound by residues 15–23 (IGSGSFGDI) and Lys38. Catalysis depends on Asp128, which acts as the Proton acceptor. The interval 315–340 (QGRIPLPRVMLPTSSGRPRGTQEVAP) is autoinhibitory. Positions 322 to 403 (RVMLPTSSGR…PSGLQSAVPR (82 aa)) are disordered.

Belongs to the protein kinase superfamily. As to quaternary structure, monomer. Interacts with per1 and per2. Component of the circadian core oscillator. Post-translationally, autophosphorylated on serine and threonine residues.

It localises to the cytoplasm. It is found in the nucleus. The enzyme catalyses L-seryl-[protein] + ATP = O-phospho-L-seryl-[protein] + ADP + H(+). It catalyses the reaction L-threonyl-[protein] + ATP = O-phospho-L-threonyl-[protein] + ADP + H(+). With respect to regulation, exhibits substrate-dependent heparin activation. Its function is as follows. Casein kinases are operationally defined by their preferential utilization of acidic proteins such as caseins as substrates. Central component of the circadian clock. May act as a negative regulator of circadian rhythmicity by phosphorylating per1 and per2, which may lead to their degradation. Participates in wnt signaling. This is Casein kinase I isoform delta-A (csnk1da) from Danio rerio (Zebrafish).